We begin with the raw amino-acid sequence, 208 residues long: MFAIFTKIKDRVEAFLNEKNIVTDCLNKIEEKTGIKKRYLAYGAAGVTGAFLLLGYGASLICNLIGFVYPAYFSIKAIESPGKEDDTQWLTYWVIYGFFSVGEFFSDIFLHWFPFYYVCKCLFLLWCMAPVSWNGSQVLYRHVVRPFFLKHEAAVDGMVSNISVKAMSAAENVTREVLHTLVRNRTVGPAESEPRSLPSSAHTEPTVD.

A run of 3 helical transmembrane segments spans residues 49 to 69 (GAFLLLGYGASLICNLIGFVY), 93 to 113 (WVIYGFFSVGEFFSDIFLHWF), and 115 to 135 (FYYVCKCLFLLWCMAPVSWNG). A disordered region spans residues 187 to 208 (VGPAESEPRSLPSSAHTEPTVD). Over residues 197-208 (LPSSAHTEPTVD) the composition is skewed to polar residues.

This sequence belongs to the DP1 family.

The protein resides in the endoplasmic reticulum membrane. Its subcellular location is the cytoplasmic vesicle. The protein localises to the clathrin-coated vesicle membrane. Required correct function and survival of retinal photoreceptors. Required for retinal development. In rod photoreceptors, facilitates stability and/or trafficking of guanylate cyclases and is required to maintain endoplasmic reticulum and mitochondrial homeostasis. May play a role in clathrin-coated intracellular vesicle trafficking of proteins from the endoplasmic reticulum to the retinal rod plasma membrane. The polypeptide is Receptor expression-enhancing protein 6 (Danio rerio (Zebrafish)).